We begin with the raw amino-acid sequence, 274 residues long: Diaminopimelate epimerase (274 aa).

The substrate site is built by N11, Q44, and N64. C73 acts as the Proton donor in catalysis. Residues 74-75, N157, N190, and 208-209 each bind substrate; these read GN and ER. The active-site Proton acceptor is the C217. 218-219 provides a ligand contact to substrate; sequence GS.

This sequence belongs to the diaminopimelate epimerase family. In terms of assembly, homodimer.

Its subcellular location is the cytoplasm. The catalysed reaction is (2S,6S)-2,6-diaminopimelate = meso-2,6-diaminopimelate. It functions in the pathway amino-acid biosynthesis; L-lysine biosynthesis via DAP pathway; DL-2,6-diaminopimelate from LL-2,6-diaminopimelate: step 1/1. Its function is as follows. Catalyzes the stereoinversion of LL-2,6-diaminopimelate (L,L-DAP) to meso-diaminopimelate (meso-DAP), a precursor of L-lysine and an essential component of the bacterial peptidoglycan. The sequence is that of Diaminopimelate epimerase from Actinobacillus pleuropneumoniae serotype 7 (strain AP76).